A 25-amino-acid chain; its full sequence is Ranatuerin-1 (25 aa).

Cysteines 19 and 25 form a disulfide.

Belongs to the frog skin active peptide (FSAP) family. Ranatuerin subfamily. In terms of tissue distribution, expressed by the skin glands.

It localises to the secreted. Functionally, antibacterial activity against Gram-positive bacterium S.aureus (MIC=50 uM) and Gram-negative bacterium E.coli (MIC=2 uM). Has activity against C.albicans (MIC=70 uM). Shows no detectable hemolytic activity towards human erythrocytes. In Aquarana catesbeiana (American bullfrog), this protein is Ranatuerin-1.